The chain runs to 111 residues: Integration host factor subunit alpha (111 aa).

Belongs to the bacterial histone-like protein family. As to quaternary structure, heterodimer of an alpha and a beta chain.

Functionally, this protein is one of the two subunits of integration host factor, a specific DNA-binding protein that functions in genetic recombination as well as in transcriptional and translational control. The protein is Integration host factor subunit alpha of Polaromonas sp. (strain JS666 / ATCC BAA-500).